Here is an 89-residue protein sequence, read N- to C-terminus: Gamma-bungarotoxin (89 aa).

The signal sequence occupies residues 1–21 (MKTLLLTLVVVTIVCLDLGYT). Intrachain disulfides connect C24/C45, C27/C32, C38/C66, C70/C81, and C82/C87. Residues 54–56 (RGD) carry the Cell attachment site motif.

Belongs to the three-finger toxin family. Ancestral subfamily. Orphan group V sub-subfamily. Expressed by the venom gland.

The protein resides in the secreted. In terms of biological role, exhibits M2 muscarinic acetylcholine receptor (CHRM2)-blocking activity, but has a weak binding activity toward nicotinic AChR. Moreover, it inhibits collagen-induced platelet aggregation. This is Gamma-bungarotoxin from Bungarus multicinctus (Many-banded krait).